The primary structure comprises 345 residues: Protein-glutamate methylesterase/protein-glutamine glutaminase (345 aa).

The region spanning 5-123 is the Response regulatory domain; that stretch reads KVIVVDDSVL…ELSKMKDDLI (119 aa). Asp56 bears the 4-aspartylphosphate mark. A CheB-type methylesterase domain is found at 153–343; it reads SSDSIEAVVI…DEIIKIVRGL (191 aa). Active-site residues include Ser165, His192, and Asp285.

The protein belongs to the CheB family. Post-translationally, phosphorylated by CheA. Phosphorylation of the N-terminal regulatory domain activates the methylesterase activity.

The protein localises to the cytoplasm. The catalysed reaction is [protein]-L-glutamate 5-O-methyl ester + H2O = L-glutamyl-[protein] + methanol + H(+). The enzyme catalyses L-glutaminyl-[protein] + H2O = L-glutamyl-[protein] + NH4(+). Involved in chemotaxis. Part of a chemotaxis signal transduction system that modulates chemotaxis in response to various stimuli. Catalyzes the demethylation of specific methylglutamate residues introduced into the chemoreceptors (methyl-accepting chemotaxis proteins or MCP) by CheR. Also mediates the irreversible deamidation of specific glutamine residues to glutamic acid. In Clostridium acetobutylicum (strain ATCC 824 / DSM 792 / JCM 1419 / IAM 19013 / LMG 5710 / NBRC 13948 / NRRL B-527 / VKM B-1787 / 2291 / W), this protein is Protein-glutamate methylesterase/protein-glutamine glutaminase.